We begin with the raw amino-acid sequence, 228 residues long: MPVIDLATTPLREFNRSLHNIQQGSNDLSYEVANPRGSHAVAVGIDGPVVVDVNGSVGYYCAGMNDGGTVTVHGSAGPGVAENMMSGKVVIEGDASQYAGATGRGGLLVIKGNAASRCGISMKGIDIVVHGNIGHMSAFMGQSGHLVVLGDAGDALGDSLYEAKLFVRGTVKSLGADCIEKEMRPEHLQKLAELLEKADVKDVRPEEFKRYGSARKLYNFNIDNADAY.

Belongs to the FwdC/FmdC family.

In Rhizobium meliloti (strain 1021) (Ensifer meliloti), this protein is Protein GlxC (glxC).